The chain runs to 236 residues: Small ribosomal subunit protein uS2c (236 aa).

It belongs to the universal ribosomal protein uS2 family.

The protein resides in the plastid. It localises to the chloroplast. The polypeptide is Small ribosomal subunit protein uS2c (rps2) (Nicotiana tabacum (Common tobacco)).